The sequence spans 391 residues: Phosphoglycerate kinase (391 aa).

Substrate-binding positions include 21-23 (DLN), Arg-36, 59-62 (HLGR), Arg-113, and Arg-146. ATP-binding positions include Lys-197, Glu-319, and 345–348 (GGDT).

Belongs to the phosphoglycerate kinase family. As to quaternary structure, monomer.

The protein localises to the cytoplasm. The enzyme catalyses (2R)-3-phosphoglycerate + ATP = (2R)-3-phospho-glyceroyl phosphate + ADP. The protein operates within carbohydrate degradation; glycolysis; pyruvate from D-glyceraldehyde 3-phosphate: step 2/5. The protein is Phosphoglycerate kinase of Xanthomonas axonopodis pv. citri (strain 306).